Here is a 72-residue protein sequence, read N- to C-terminus: Lantibiotic lichenicidin VK21 A2 (72 aa).

A disordered region spans residues 1–21 (MKTMKNSAAREAFKGANHPAG). Residues 1-40 (MKTMKNSAAREAFKGANHPAGMVSEEELKALVGGNDVNPE) constitute a propeptide that is removed on maturation. Thr41 is modified (2-oxobutanoic acid). (Z)-2,3-didehydrobutyrine is present on residues Thr42, Thr45, and Thr46. The segment at residues 47–51 (SSWTC) is a cross-link (lanthionine (Ser-Cys)). Ser48 carries the post-translational modification 2,3-didehydroalanine (Ser). (Z)-2,3-didehydrobutyrine occurs at positions 53 and 57. A cross-link (lanthionine (Ser-Cys)) is located at residues 59-63 (SASLC). Cross-links (beta-methyllanthionine (Thr-Cys)) lie at residues 65 to 68 (TTKC) and 69 to 72 (TSRC). Thr66 is subject to (Z)-2,3-didehydrobutyrine.

In terms of processing, maturation of lantibiotics involves the enzymatic conversion of Thr, and Ser into dehydrated AA and the formation of thioether bonds with cysteine. This is followed by membrane translocation and cleavage of the modified precursor. The 2,3-didehydrobutyrines are determined to be the Z-isomers.

It localises to the secreted. Functionally, lanthionine-containing peptide antibiotic (lantibiotic) active on Gram-positive bacteria. The bactericidal activity of lantibiotics is based on depolarization of energized bacterial cytoplasmic membranes, initiated by the formation of aqueous transmembrane pores. When present individually, LchA2 exhibits activity towards B.subtilis L1 (IC(50)=30 uM), Rhodococcus sp. SS2 (IC(50)=16.6 uM), M.luteus B1314 (IC(50)=2.6 uM), B.megaterium VKM41 (IC(50)=2 uM), S.aureus 209p (IC(50)=20 uM), B.pumilus 2001, B.globigii I, B.amyloliquefaciens I, M.smegmatis 1171 and M.phlei 1291. However, when combined with LchA1, it displays much stronger activity against B.subtilis L1 (IC(50)=0.64 uM), Rhodococcus sp. SS2 (IC(50)=0.64 uM), M.luteus B1314 (IC(50)=0.09 uM), B.megaterium VKM41 (IC(50)=0.12 uM) and S.aureus 209p (IC(50)=0.64 uM). The activity of the combined LchA1 and LchA2 peptides is strongest at a molar ratio of 1. Even when applied at 17-fold concentration of the highest IC(50) values for Gram-positive bacteria, neither the individual nor the combined peptides display activity against Gram-negative bacteria P.aeruginosa PAO1, P.putida I-97 or E.coli C600. The protein is Lantibiotic lichenicidin VK21 A2 of Bacillus licheniformis.